We begin with the raw amino-acid sequence, 108 residues long: Large ribosomal subunit protein uL24 (108 aa).

This sequence belongs to the universal ribosomal protein uL24 family. As to quaternary structure, part of the 50S ribosomal subunit.

Its function is as follows. One of two assembly initiator proteins, it binds directly to the 5'-end of the 23S rRNA, where it nucleates assembly of the 50S subunit. One of the proteins that surrounds the polypeptide exit tunnel on the outside of the subunit. This is Large ribosomal subunit protein uL24 from Citrifermentans bemidjiense (strain ATCC BAA-1014 / DSM 16622 / JCM 12645 / Bem) (Geobacter bemidjiensis).